The chain runs to 179 residues: ATP-dependent protease subunit HslV (179 aa).

Threonine 5 is a catalytic residue. Residues glycine 164, cysteine 167, and threonine 170 each contribute to the Na(+) site.

This sequence belongs to the peptidase T1B family. HslV subfamily. As to quaternary structure, a double ring-shaped homohexamer of HslV is capped on each side by a ring-shaped HslU homohexamer. The assembly of the HslU/HslV complex is dependent on binding of ATP.

The protein localises to the cytoplasm. It carries out the reaction ATP-dependent cleavage of peptide bonds with broad specificity.. Its activity is regulated as follows. Allosterically activated by HslU binding. Protease subunit of a proteasome-like degradation complex believed to be a general protein degrading machinery. The polypeptide is ATP-dependent protease subunit HslV (Verminephrobacter eiseniae (strain EF01-2)).